The following is a 349-amino-acid chain: Protein-glutamate methylesterase/protein-glutamine glutaminase 1 (349 aa).

Residues 2-119 (RTLIVDDSAF…DVNKAEKELV (118 aa)) enclose the Response regulatory domain. 4-aspartylphosphate is present on D53. One can recognise a CheB-type methylesterase domain in the interval 158 to 345 (ILIGSSTGGP…EEIVKRLEAK (188 aa)). Residues S163, H190, and D287 contribute to the active site.

The protein belongs to the CheB family. In terms of processing, phosphorylated by CheA. Phosphorylation of the N-terminal regulatory domain activates the methylesterase activity.

The protein resides in the cytoplasm. The enzyme catalyses [protein]-L-glutamate 5-O-methyl ester + H2O = L-glutamyl-[protein] + methanol + H(+). It carries out the reaction L-glutaminyl-[protein] + H2O = L-glutamyl-[protein] + NH4(+). In terms of biological role, involved in chemotaxis. Part of a chemotaxis signal transduction system that modulates chemotaxis in response to various stimuli. Catalyzes the demethylation of specific methylglutamate residues introduced into the chemoreceptors (methyl-accepting chemotaxis proteins or MCP) by CheR. Also mediates the irreversible deamidation of specific glutamine residues to glutamic acid. The protein is Protein-glutamate methylesterase/protein-glutamine glutaminase 1 of Methanosarcina acetivorans (strain ATCC 35395 / DSM 2834 / JCM 12185 / C2A).